Reading from the N-terminus, the 291-residue chain is Pyridoxal 5'-phosphate synthase subunit PdxS (291 aa).

Asp-23 is a D-ribose 5-phosphate binding site. Lys-80 functions as the Schiff-base intermediate with D-ribose 5-phosphate in the catalytic mechanism. A D-ribose 5-phosphate-binding site is contributed by Gly-152. Residue Arg-164 coordinates D-glyceraldehyde 3-phosphate. D-ribose 5-phosphate-binding positions include Gly-213 and 234-235 (GS).

Belongs to the PdxS/SNZ family. In the presence of PdxT, forms a dodecamer of heterodimers.

The enzyme catalyses aldehydo-D-ribose 5-phosphate + D-glyceraldehyde 3-phosphate + L-glutamine = pyridoxal 5'-phosphate + L-glutamate + phosphate + 3 H2O + H(+). It participates in cofactor biosynthesis; pyridoxal 5'-phosphate biosynthesis. Its function is as follows. Catalyzes the formation of pyridoxal 5'-phosphate from ribose 5-phosphate (RBP), glyceraldehyde 3-phosphate (G3P) and ammonia. The ammonia is provided by the PdxT subunit. Can also use ribulose 5-phosphate and dihydroxyacetone phosphate as substrates, resulting from enzyme-catalyzed isomerization of RBP and G3P, respectively. This is Pyridoxal 5'-phosphate synthase subunit PdxS from Clostridium acetobutylicum (strain ATCC 824 / DSM 792 / JCM 1419 / IAM 19013 / LMG 5710 / NBRC 13948 / NRRL B-527 / VKM B-1787 / 2291 / W).